A 451-amino-acid polypeptide reads, in one-letter code: Tryptophan--tRNA ligase (451 aa).

Residues 10 to 12 (TTT) and 18 to 19 (GN) each bind ATP. The 'HIGH' region motif lies at 11 to 19 (TTGTPHLGN). D143 contributes to the L-tryptophan binding site. Residues 155-157 (GRD), L195, and 202-206 (KMSKS) each bind ATP. Residues 202–206 (KMSKS) carry the 'KMSKS' region motif.

This sequence belongs to the class-I aminoacyl-tRNA synthetase family. As to quaternary structure, homodimer.

Its subcellular location is the cytoplasm. It carries out the reaction tRNA(Trp) + L-tryptophan + ATP = L-tryptophyl-tRNA(Trp) + AMP + diphosphate + H(+). Its function is as follows. Catalyzes the attachment of tryptophan to tRNA(Trp). This chain is Tryptophan--tRNA ligase, found in Bordetella bronchiseptica (strain ATCC BAA-588 / NCTC 13252 / RB50) (Alcaligenes bronchisepticus).